We begin with the raw amino-acid sequence, 526 residues long: MADGQLKVLTTLDHARTQWYHFMAIVIAGMGFFTDAYDLFCISLVSKLLGRIYYTDLAGDNPGSLPPNVSAAVNGVALCGTLAGQLFFGWLGDKLGRKSVYGFTLVLMVVCSVASGLSFGRTAKGVVATLCFFRFWLGFGIGGDYPLSATIMSEYANKRTRGAFIAAVFAMQGFGILFGAIVALVVSAGFRNAYPAPSYADGRAASLVPEADYVWRIILMFGTVPAALTYYWRMKMPETARYTALIARNAKQAAADMSKVLDTEIQEDADRAEAVAAGGAGNEWGLFSRQFVRRHGVHLVATTSTWFLLDIAFYSQNLFQKDIFSKVGWIPPARTMNAVEEVFRIARAQALIALCGTIPGYWFTVAFIDVAGRFAIQLMGFAMMTVFMLGLAAPYHHWTTPGNHTGFVVMYGFTFFFANFGPNATTFIVPAEIYPARLRSTCHGISAAAGKAGAIVGAFGFLYAAQDPHKPEAGYKPGIGIRNALFVLAGTNFLGMLMTLLVPESKGMSLEEVSKENVADDEEATA.

Residues 1–21 (MADGQLKVLTTLDHARTQWYH) lie on the Cytoplasmic side of the membrane. Residues 22–42 (FMAIVIAGMGFFTDAYDLFCI) traverse the membrane as a helical segment. At 43 to 70 (SLVSKLLGRIYYTDLAGDNPGSLPPNVS) the chain is on the extracellular side. Residues 71–91 (AAVNGVALCGTLAGQLFFGWL) form a helical membrane-spanning segment. Residues 92–99 (GDKLGRKS) lie on the Cytoplasmic side of the membrane. Residues 100 to 120 (VYGFTLVLMVVCSVASGLSFG) form a helical membrane-spanning segment. At 121 to 124 (RTAK) the chain is on the extracellular side. The helical transmembrane segment at 125–145 (GVVATLCFFRFWLGFGIGGDY) threads the bilayer. Residues 146–163 (PLSATIMSEYANKRTRGA) are Cytoplasmic-facing. The helical transmembrane segment at 164–184 (FIAAVFAMQGFGILFGAIVAL) threads the bilayer. The Extracellular segment spans residues 185–211 (VVSAGFRNAYPAPSYADGRAASLVPEA). The helical transmembrane segment at 212–232 (DYVWRIILMFGTVPAALTYYW) threads the bilayer. The Cytoplasmic segment spans residues 233 to 294 (RMKMPETARY…GLFSRQFVRR (62 aa)). A helical membrane pass occupies residues 295–315 (HGVHLVATTSTWFLLDIAFYS). Residues 316-349 (QNLFQKDIFSKVGWIPPARTMNAVEEVFRIARAQ) are Extracellular-facing. Residues 350–370 (ALIALCGTIPGYWFTVAFIDV) form a helical membrane-spanning segment. Topologically, residues 371–373 (AGR) are cytoplasmic. A helical membrane pass occupies residues 374–394 (FAIQLMGFAMMTVFMLGLAAP). Over 395–407 (YHHWTTPGNHTGF) the chain is Extracellular. The helical transmembrane segment at 408–428 (VVMYGFTFFFANFGPNATTFI) threads the bilayer. The Cytoplasmic portion of the chain corresponds to 429-444 (VPAEIYPARLRSTCHG). Residues 445–465 (ISAAAGKAGAIVGAFGFLYAA) form a helical membrane-spanning segment. Over 466-483 (QDPHKPEAGYKPGIGIRN) the chain is Extracellular. The helical transmembrane segment at 484–504 (ALFVLAGTNFLGMLMTLLVPE) threads the bilayer. Topologically, residues 505-526 (SKGMSLEEVSKENVADDEEATA) are cytoplasmic.

It belongs to the major facilitator superfamily. Phosphate:H(+) symporter (TC 2.A.1.9) family. As to expression, expressed at low levels in roots.

The protein localises to the membrane. Functionally, high-affinity transporter for external inorganic phosphate. This chain is Probable inorganic phosphate transporter 1-3 (PHT1-3), found in Oryza sativa subsp. japonica (Rice).